We begin with the raw amino-acid sequence, 121 residues long: Non-structural protein 8 (121 aa).

The N-terminal stretch at 1-15 (MKLLIVFGLLTSVYC) is a signal peptide. The region spanning 19–121 (ECSIQECCEN…HDVRVVLDFI (103 aa)) is the SARS ORF8 Ig-like domain. 3 cysteine pairs are disulfide-bonded: Cys25–Cys90, Cys37–Cys102, and Cys61–Cys83.

This is Non-structural protein 8 from Rhinolophus macrotis (Big-eared horseshoe bat).